The sequence spans 88 residues: Small ribosomal subunit protein uS17 (88 aa).

Belongs to the universal ribosomal protein uS17 family. Part of the 30S ribosomal subunit.

One of the primary rRNA binding proteins, it binds specifically to the 5'-end of 16S ribosomal RNA. This chain is Small ribosomal subunit protein uS17, found in Ruthia magnifica subsp. Calyptogena magnifica.